A 420-amino-acid polypeptide reads, in one-letter code: COP9 signalosome complex subunit 5 (420 aa).

The MPN domain maps to 73 to 208 (AALSALACMK…IGAFRTMPET (136 aa)). Positions 154, 156, and 167 each coordinate Zn(2+). A JAMM motif motif is present at residues 154–167 (HSHPGYGCWLSGID).

The protein belongs to the peptidase M67A family. CSN5 subfamily. In terms of assembly, component of the COP9 signalosome (CSN) complex.

The protein resides in the cytoplasm. The protein localises to the nucleus. Catalytic component of the COP9 signalosome (CSN) complex that acts as an regulator of the ubiquitin (Ubl) conjugation pathway by mediating the deneddylation of the cullin subunit of SCF-type E3 ubiquitin-protein ligase complexes. The CSN complex is involved in the regulation of the mating pheromone response. This Eremothecium gossypii (strain ATCC 10895 / CBS 109.51 / FGSC 9923 / NRRL Y-1056) (Yeast) protein is COP9 signalosome complex subunit 5 (RRI1).